A 71-amino-acid chain; its full sequence is Translational regulator CsrA (71 aa).

The disordered stretch occupies residues 50–71 (RIRHEKDGDVPEAAPGQGADPQ).

The protein belongs to the CsrA/RsmA family. As to quaternary structure, homodimer; the beta-strands of each monomer intercalate to form a hydrophobic core, while the alpha-helices form wings that extend away from the core.

It is found in the cytoplasm. In terms of biological role, a key translational regulator that binds mRNA to regulate translation initiation and/or mRNA stability. Mediates global changes in gene expression, shifting from rapid growth to stress survival by linking envelope stress, the stringent response and the catabolite repression systems. Usually binds in the 5'-UTR; binding at or near the Shine-Dalgarno sequence prevents ribosome-binding, repressing translation, binding elsewhere in the 5'-UTR can activate translation and/or stabilize the mRNA. Its function is antagonized by small RNA(s). In Halorhodospira halophila (strain DSM 244 / SL1) (Ectothiorhodospira halophila (strain DSM 244 / SL1)), this protein is Translational regulator CsrA.